Reading from the N-terminus, the 535-residue chain is Zinc transporter ZIP5 (535 aa).

An N-terminal signal peptide occupies residues 1-19 (MGPPVHHLLTGLCVGVALG). At 20–210 (WVGGSVPNLG…PAPPGDVLSA (191 aa)) the chain is on the extracellular side. N-linked (GlcNAc...) asparagine glycans are attached at residues Asn49 and Asn158. A helical membrane pass occupies residues 211–231 (LLHSGLAVLFLSLPAPLSLLL). The Cytoplasmic portion of the chain corresponds to 232-242 (LRLLGPRLLRP). A helical transmembrane segment spans residues 243-263 (VLGFLGALAVGTLCGDALLHL). Residues 264 to 285 (LPHAQGGRHTGPSEQSEEDLGP) lie on the Extracellular side of the membrane. The helical transmembrane segment at 286–306 (GLSVLGGLFLLFMLENTLGLV) threads the bilayer. The Cytoplasmic portion of the chain corresponds to 307–439 (RHRGLRPRCC…LLQEGLSFRK (133 aa)). The disordered stretch occupies residues 316–373 (CRNKRDLGEPNPDPEDGSGMVLRPLQAASEPEVQGQRENRQSSPSLAPPGHQGHSHEH). Ser333 carries the post-translational modification Phosphoserine. His371 carries the post-translational modification Pros-methylhistidine. A helical membrane pass occupies residues 440–460 (LLLLSLVSGALGLGGAALGVG). At 461-465 (LSLGP) the chain is on the extracellular side. Residues 466 to 486 (VPLTPWVFGTTAGVFLYVALV) form a helical membrane-spanning segment. The Cytoplasmic portion of the chain corresponds to 487–503 (DMLPTLLRPPEPLPVFH). The helical transmembrane segment at 504 to 524 (VLLQGLGLLLGGSLMFTIALL) threads the bilayer. At 525–535 (EEQLVPTVPDG) the chain is on the extracellular side.

Belongs to the ZIP transporter (TC 2.A.5) family. In terms of assembly, homodimer. N-Glycosylated. In terms of processing, methylated at His-371 by METTL9. In terms of tissue distribution, expressed in all stages of eye development and primarily in the sclera and several layers of the retina, including the inner segment, outer plexiform layer and ganglion cell layer. Expressed in pancreas, kidney and the proximal and distal small intestine as well as in the embryonic visceral yolk sac. In the proximal intestine, expression is predominant in the crypts but diminishes toward the apical regions of the villi.

It is found in the basolateral cell membrane. The enzyme catalyses Zn(2+)(in) = Zn(2+)(out). Its function is as follows. Uniporter that transports zinc(2+) into polarized cells of enterocytes, pancreatic acinar and endoderm cells across the basolateral membrane and participates, notably, in zinc excretion from the intestine by the uptake of zinc from the blood into the intestine. The transport mechanism is temperature- and concentration-dependent and saturable. In addition, is also a high affinity copper transporter in vitro. Also may regulate glucose-stimulated insulin secretion (GSIS) in islets primarily through the zinc-activated SIRT1-PPARGC1A axis. Could regulate the BMP/TGF-beta (bone morphogenetic protein/transforming growth factor-beta) signaling pathway and modulates extracellular matrix (ECM) proteins of the sclera. Plays a role in eye development. This Mus musculus (Mouse) protein is Zinc transporter ZIP5.